The following is a 457-amino-acid chain: tRNA-2-methylthio-N(6)-dimethylallyladenosine synthase (457 aa).

The region spanning 3–120 (KKVYVKTFGC…LPQMIDARRA (118 aa)) is the MTTase N-terminal domain. The [4Fe-4S] cluster site is built by C12, C49, C83, C157, C161, and C164. Residues 143–377 (RVEGPSAFVS…QATIEENVAR (235 aa)) form the Radical SAM core domain. Positions 380 to 447 (QSMVGKVERI…PHSLRGELVL (68 aa)) constitute a TRAM domain.

The protein belongs to the methylthiotransferase family. MiaB subfamily. In terms of assembly, monomer. [4Fe-4S] cluster is required as a cofactor.

The protein localises to the cytoplasm. It catalyses the reaction N(6)-dimethylallyladenosine(37) in tRNA + (sulfur carrier)-SH + AH2 + 2 S-adenosyl-L-methionine = 2-methylsulfanyl-N(6)-dimethylallyladenosine(37) in tRNA + (sulfur carrier)-H + 5'-deoxyadenosine + L-methionine + A + S-adenosyl-L-homocysteine + 2 H(+). In terms of biological role, catalyzes the methylthiolation of N6-(dimethylallyl)adenosine (i(6)A), leading to the formation of 2-methylthio-N6-(dimethylallyl)adenosine (ms(2)i(6)A) at position 37 in tRNAs that read codons beginning with uridine. The protein is tRNA-2-methylthio-N(6)-dimethylallyladenosine synthase of Burkholderia cenocepacia (strain HI2424).